Here is a 332-residue protein sequence, read N- to C-terminus: MKVTFEELKGAFYRVLRSRNIAEDTADKCAEMFARTTESGVYSHGVNRFPRFIQQLDNGDIIPDAKPQRVTSLGAIEQWDAQRAIGNLTAKKMMDRAIELASDHGIGLVALRNANHWMRGGSYGWQAAEKGYIGICWTNSIAVMPPWGAKECRIGTNPLIVAIPSTPITMVDMSMSMFSYGMLEVNRLAGRELPVDGGFDDNGQLTKEPGVIEKNRRILPMGYWKGSGLSIVLDMIATLLSNGSSVAEVTQENSDEYGVSQIFIAIEVDKLIDGATRDAKLQRIMDFITTAERADDNVAIRLPGHEFTKLLDDNRRHGITIDDSVWAKIQAL.

The Proton donor role is filled by His-44. NAD(+) contacts are provided by residues 168–174, 224–225, and 304–306; these read ITMVDMS, WK, and GHE.

The protein belongs to the LDH2/MDH2 oxidoreductase family. DlgD subfamily. Homodimer.

Its subcellular location is the cytoplasm. The catalysed reaction is 3-dehydro-L-gulonate + NAD(+) = 2,3-dioxo-L-gulonate + NADH + H(+). It carries out the reaction 3-dehydro-L-gulonate + NADP(+) = 2,3-dioxo-L-gulonate + NADPH + H(+). Catalyzes the reduction of 2,3-diketo-L-gulonate in the presence of NADH, to form 3-keto-L-gulonate. In Salmonella newport (strain SL254), this protein is 2,3-diketo-L-gulonate reductase.